The primary structure comprises 437 residues: tRNA-2-methylthio-N(6)-dimethylallyladenosine synthase (437 aa).

Residues Lys5–Thr121 form the MTTase N-terminal domain. Residues Cys14, Cys50, Cys84, Cys159, Cys163, and Cys166 each contribute to the [4Fe-4S] cluster site. A Radical SAM core domain is found at Ala145–Ala371. The TRAM domain occupies Asp374–Ala436.

This sequence belongs to the methylthiotransferase family. MiaB subfamily. In terms of assembly, monomer. It depends on [4Fe-4S] cluster as a cofactor.

It localises to the cytoplasm. It carries out the reaction N(6)-dimethylallyladenosine(37) in tRNA + (sulfur carrier)-SH + AH2 + 2 S-adenosyl-L-methionine = 2-methylsulfanyl-N(6)-dimethylallyladenosine(37) in tRNA + (sulfur carrier)-H + 5'-deoxyadenosine + L-methionine + A + S-adenosyl-L-homocysteine + 2 H(+). Functionally, catalyzes the methylthiolation of N6-(dimethylallyl)adenosine (i(6)A), leading to the formation of 2-methylthio-N6-(dimethylallyl)adenosine (ms(2)i(6)A) at position 37 in tRNAs that read codons beginning with uridine. This Dinoroseobacter shibae (strain DSM 16493 / NCIMB 14021 / DFL 12) protein is tRNA-2-methylthio-N(6)-dimethylallyladenosine synthase.